Here is a 451-residue protein sequence, read N- to C-terminus: Phenolic glucoside malonyltransferase 2 (451 aa).

Catalysis depends on histidine 165, which acts as the Proton acceptor. Residues 165-169 (HAVLD) carry the HXXXD motif motif. Malonyl-CoA-binding positions include histidine 270 and 272–273 (ST). Aspartate 395 serves as the catalytic Proton acceptor. Positions 395 to 399 (DFGWG) match the DFGWG motif motif.

The protein belongs to the plant acyltransferase family. Phenolic glucoside malonyltransferase subfamily.

It catalyses the reaction a flavonol 7-O-beta-D-glucoside + malonyl-CoA = a flavonol 7-O-(6-O-malonyl-beta-D-glucoside) + CoA. Functionally, malonyltransferase acting on xenobiotic glucosides. Has activity toward 2-Naphthol glucoside (2NAG), 1-Naphthol glucoside (1NAG), kaempferol 7-O-glucoside, hydroxycoumarin glucosides and phenol-glucosides, but not toward kaempferol 3-O-glucoside or daidzin. Prefers phenol glucosides rather than naphtol glucosides. In vivo, seems to be involved in the malonylation of 4-methylumbelliferone glucoside or 4-nitrophenyl glucoside while PMAT1 would be involved in the malonylation of 2-Naphthol glucoside. The protein is Phenolic glucoside malonyltransferase 2 (PMAT2) of Arabidopsis thaliana (Mouse-ear cress).